A 237-amino-acid polypeptide reads, in one-letter code: Leucyl/phenylalanyl-tRNA--protein transferase (237 aa).

It belongs to the L/F-transferase family.

It localises to the cytoplasm. It catalyses the reaction N-terminal L-lysyl-[protein] + L-leucyl-tRNA(Leu) = N-terminal L-leucyl-L-lysyl-[protein] + tRNA(Leu) + H(+). The catalysed reaction is N-terminal L-arginyl-[protein] + L-leucyl-tRNA(Leu) = N-terminal L-leucyl-L-arginyl-[protein] + tRNA(Leu) + H(+). The enzyme catalyses L-phenylalanyl-tRNA(Phe) + an N-terminal L-alpha-aminoacyl-[protein] = an N-terminal L-phenylalanyl-L-alpha-aminoacyl-[protein] + tRNA(Phe). In terms of biological role, functions in the N-end rule pathway of protein degradation where it conjugates Leu, Phe and, less efficiently, Met from aminoacyl-tRNAs to the N-termini of proteins containing an N-terminal arginine or lysine. In Aromatoleum aromaticum (strain DSM 19018 / LMG 30748 / EbN1) (Azoarcus sp. (strain EbN1)), this protein is Leucyl/phenylalanyl-tRNA--protein transferase.